Here is a 462-residue protein sequence, read N- to C-terminus: MLNNFLNLELLNISLSYPFLFLITTAIVLLLCSGFWKFHRSFYIGISSLSLIVSAFLILNNANAQGLEAKAFLATLNNDIVSFYASLVILCFSFLYLLMQKEENQGEFYALFLFMIASLLLMVSSSNLVLIFIGLESSSLALYTLIAMRGSDNAISSAIKYFSIAAVGAGFFVMAVAFIYLKTGTLDLSANLALKNEFQKDPMLLGAGVMIFVLCAIKLSLAPFHFWLKDVYYAAHTNLVAFISVVPKVAMLVVVIRLFDFLNNTGFEYIIIVLAIFSMLIGAFAALSQNNIKKMFAYSSVVHSSLVLIACIPLLKEQNFDGILLAIFGYWTLFAFANYAVFMILSNYENNSYESLNGLLVKKPLIAFCLSISVLSLAGIPPFGVFWGKFMILNTVILNGYWYLALFVALSSVIMLYAYLKILIHVLFMKNDRVYNIKFSFIQNFILAFCVCVSIFAILLML.

13 consecutive transmembrane segments (helical) span residues 15 to 35 (LSYP…CSGF), 42 to 62 (FYIG…LNNA), 80 to 100 (IVSF…LLMQ), 113 to 133 (LFMI…LIFI), 161 to 181 (YFSI…FIYL), 204 to 224 (LLGA…LAPF), 239 to 259 (LVAF…IRLF), 267 to 287 (FEYI…FAAL), 295 to 315 (MFAY…IPLL), 323 to 343 (ILLA…AVFM), 366 to 386 (IAFC…FGVF), 396 to 416 (VILN…VIML), and 441 to 461 (FIQN…ILLM).

It belongs to the complex I subunit 2 family. NDH-1 is composed of 14 different subunits. Subunits NuoA, H, J, K, L, M, N constitute the membrane sector of the complex.

Its subcellular location is the cell inner membrane. It carries out the reaction a quinone + NADH + 5 H(+)(in) = a quinol + NAD(+) + 4 H(+)(out). NDH-1 shuttles electrons from NADH, via FMN and iron-sulfur (Fe-S) centers, to quinones in the respiratory chain. The immediate electron acceptor for the enzyme in this species is believed to be ubiquinone. Couples the redox reaction to proton translocation (for every two electrons transferred, four hydrogen ions are translocated across the cytoplasmic membrane), and thus conserves the redox energy in a proton gradient. The sequence is that of NADH-quinone oxidoreductase subunit N from Campylobacter jejuni (strain RM1221).